A 491-amino-acid chain; its full sequence is MATFKDACFHYRKITKLNRELLRIGANSVWTSVQSNKIKGWCVECCQLTELTYCSGCSLAHVCQLCITNKRCFLDSQPHLLKLRTFESPITKEKLQCVINLYDKLFPINNTIINKFKKSTRQRKCRNGLNETWYNQLLLPITLNAAVFKFKTRTVYVFGFYEGSVSVENLPYRIINCIDIYDRLLLDQINFERMNSLPVSLQSIYAQKYFRVSRIPSMKLRQIYYSDFTKQNLITKYRTKSRIVHRNISKINWNTEIELHNTLTHNKNKILEILSTSIERQFLVHDINLGRVKADMFELGHQCKPNYVSSNHWQPASKISVCKWCNIKYAFKDMDWRMESMYNELMSFIQACYKSNTNVDHCSSIESIYPIIRNVYWHSTTNYIDETLNKLFSMMNPVCIDSQSVINFHCQIDLSLYLHIKMILEMEVLPFILNVNQFKDIIKGIMNQWCNFSKLSELPLCIESTTTLLELEKQGKLSEEYDLLISDSDDD.

Residues 1–81 (MATFKDACFH…CFLDSQPHLL (81 aa)) are RNA-binding. The tract at residues 42–79 (CVECCQLTELTYCSGCSLAHVCQLCITNKRCFLDSQPH) is zinc-binding domain. The segment at 82-176 (KLRTFESPIT…VENLPYRIIN (95 aa)) is important for cytoskeleton localization. The interaction with host IRF3 stretch occupies residues 318-491 (KISVCKWCNI…DLLISDSDDD (174 aa)). Positions 483–486 (LLIS) match the pLxIS motif motif.

This sequence belongs to the rotavirus NSP1 family. In terms of assembly, interacts (via C-terminus) with host IRF3; this interaction leads to IRF3 degradation. Interacts with host IRF7; this interaction leads to IRF7 degradation. Interacts with host CUL1 and CUL3.

It is found in the host cytoplasm. It localises to the host cytoskeleton. Functionally, plays a role in the inhibition of host innate immunity by inducing the degradation of key host factors required to activate interferon production such as IRF3, IRF5 or IRF7. Associates with components of cullin RING ligases (CRLs) including CUL1 or CUL3, which are essential multisubunit ubiquitination complexes, to modulate their activities. In Rotavirus A (isolate RVA/Equine/United Kingdom/H2/1976/G3P4[12]) (RV-A), this protein is Non-structural protein 1.